A 183-amino-acid chain; its full sequence is Isopentenyl-diphosphate Delta-isomerase (183 aa).

Mn(2+) is bound by residues His26 and His33. A Nudix hydrolase domain is found at 31 to 169 (PLHFAFSCYV…PFAFSPWMVE (139 aa)). Cys68 is an active-site residue. Cys68 contributes to the Mg(2+) binding site. His70 serves as a coordination point for Mn(2+). Glu88 contributes to the Mg(2+) binding site. Residues Glu118 and Glu120 each contribute to the Mn(2+) site. Glu120 is a catalytic residue.

This sequence belongs to the IPP isomerase type 1 family. Mg(2+) is required as a cofactor. The cofactor is Mn(2+).

The protein resides in the cytoplasm. The enzyme catalyses isopentenyl diphosphate = dimethylallyl diphosphate. The protein operates within isoprenoid biosynthesis; dimethylallyl diphosphate biosynthesis; dimethylallyl diphosphate from isopentenyl diphosphate: step 1/1. Functionally, catalyzes the 1,3-allylic rearrangement of the homoallylic substrate isopentenyl (IPP) to its highly electrophilic allylic isomer, dimethylallyl diphosphate (DMAPP). This is Isopentenyl-diphosphate Delta-isomerase from Corynebacterium diphtheriae (strain ATCC 700971 / NCTC 13129 / Biotype gravis).